Here is a 335-residue protein sequence, read N- to C-terminus: Phosphate acyltransferase (335 aa).

It belongs to the PlsX family. In terms of assembly, homodimer. Probably interacts with PlsY.

The protein resides in the cytoplasm. It carries out the reaction a fatty acyl-[ACP] + phosphate = an acyl phosphate + holo-[ACP]. It functions in the pathway lipid metabolism; phospholipid metabolism. In terms of biological role, catalyzes the reversible formation of acyl-phosphate (acyl-PO(4)) from acyl-[acyl-carrier-protein] (acyl-ACP). This enzyme utilizes acyl-ACP as fatty acyl donor, but not acyl-CoA. This Clostridium botulinum (strain Loch Maree / Type A3) protein is Phosphate acyltransferase.